We begin with the raw amino-acid sequence, 948 residues long: Phosphoenolpyruvate carboxylase (948 aa).

Residues His-138 and Lys-610 contribute to the active site.

This sequence belongs to the PEPCase type 1 family. Mg(2+) is required as a cofactor.

The enzyme catalyses oxaloacetate + phosphate = phosphoenolpyruvate + hydrogencarbonate. Functionally, forms oxaloacetate, a four-carbon dicarboxylic acid source for the tricarboxylic acid cycle. The chain is Phosphoenolpyruvate carboxylase from Streptococcus sanguinis (strain SK36).